The sequence spans 130 residues: Small ribosomal subunit protein uS8 (130 aa).

Belongs to the universal ribosomal protein uS8 family. Part of the 30S ribosomal subunit. Contacts proteins S5 and S12.

One of the primary rRNA binding proteins, it binds directly to 16S rRNA central domain where it helps coordinate assembly of the platform of the 30S subunit. The sequence is that of Small ribosomal subunit protein uS8 from Tolumonas auensis (strain DSM 9187 / NBRC 110442 / TA 4).